Reading from the N-terminus, the 238-residue chain is Sugar fermentation stimulation protein homolog (238 aa).

The protein belongs to the SfsA family.

This is Sugar fermentation stimulation protein homolog from Bartonella tribocorum (strain CIP 105476 / IBS 506).